The following is a 261-amino-acid chain: 2-phytyl-1,4-beta-naphthoquinone methyltransferase, chloroplastic (261 aa).

The N-terminal 30 residues, 1–30 (MAALLGIVSPVTFTGKHPVNSRSRRRTVVK), are a transit peptide targeting the chloroplast.

It belongs to the class I-like SAM-binding methyltransferase superfamily. MenG/UbiE family.

Its subcellular location is the plastid. It is found in the chloroplast. The enzyme catalyses demethylphylloquinol + S-adenosyl-L-methionine = phylloquinol + S-adenosyl-L-homocysteine + H(+). Functionally, involved in the biosynthesis of phylloquinone (vitamin K1). Methyltransferase required for the conversion of 2-phytyl-1,4-beta-naphthoquinol to phylloquinol. The chain is 2-phytyl-1,4-beta-naphthoquinone methyltransferase, chloroplastic from Arabidopsis thaliana (Mouse-ear cress).